The following is a 416-amino-acid chain: Glutamyl-tRNA reductase (416 aa).

Substrate is bound by residues 49–52, serine 105, 110–112, and glutamine 116; these read TCNR and EPQ. Cysteine 50 serves as the catalytic Nucleophile. 185-190 contributes to the NADP(+) binding site; it reads GAGETI.

It belongs to the glutamyl-tRNA reductase family. As to quaternary structure, homodimer.

It carries out the reaction (S)-4-amino-5-oxopentanoate + tRNA(Glu) + NADP(+) = L-glutamyl-tRNA(Glu) + NADPH + H(+). Its pathway is porphyrin-containing compound metabolism; protoporphyrin-IX biosynthesis; 5-aminolevulinate from L-glutamyl-tRNA(Glu): step 1/2. Its function is as follows. Catalyzes the NADPH-dependent reduction of glutamyl-tRNA(Glu) to glutamate 1-semialdehyde (GSA). The protein is Glutamyl-tRNA reductase of Shewanella sediminis (strain HAW-EB3).